A 325-amino-acid chain; its full sequence is Delta(1)-pyrroline-2-carboxylate reductase (325 aa).

The protein belongs to the ornithine cyclodeaminase/mu-crystallin family.

It catalyses the reaction L-proline + NAD(+) = 1-pyrroline-2-carboxylate + NADH + H(+). The catalysed reaction is L-proline + NADP(+) = 1-pyrroline-2-carboxylate + NADPH + H(+). Functionally, catalyzes the reduction of Delta(1)-pyrroline-2-carboxylate (Pyr2C) to L-proline, using preferentially NADPH over NADH as the electron donor. Is likely involved in a degradation pathway that converts trans-3-hydroxy-L-proline (t3LHyp) to L-proline, which allows B.cereus to grow on t3LHyp as a sole carbon source. This Bacillus cereus (strain ATCC 14579 / DSM 31 / CCUG 7414 / JCM 2152 / NBRC 15305 / NCIMB 9373 / NCTC 2599 / NRRL B-3711) protein is Delta(1)-pyrroline-2-carboxylate reductase.